We begin with the raw amino-acid sequence, 184 residues long: Large ribosomal subunit protein bL9 (184 aa).

A disordered region spans residues 156-184; sequence RQAKLQNQKSEQQEAEQDASKEAADADDS. A compositionally biased stretch (basic and acidic residues) spans 173–184; that stretch reads DASKEAADADDS.

It belongs to the bacterial ribosomal protein bL9 family.

Functionally, binds to the 23S rRNA. The chain is Large ribosomal subunit protein bL9 from Wolbachia pipientis subsp. Culex pipiens (strain wPip).